Reading from the N-terminus, the 1076-residue chain is Serine/threonine-protein phosphatase 6 regulatory ankyrin repeat subunit C (1076 aa).

ANK repeat units follow at residues 7–36, 40–69, 73–102, 106–135, 139–168, 172–201, 205–234, 238–267, 271–301, 305–334, 338–367, 371–400, 422–451, 455–484, 488–545, 549–579, 584–613, 617–646, 651–680, 687–716, 720–749, 753–782, 790–819, 822–852, 857–886, 890–920, 924–953, and 960–989; these read TDQP…NINV, ERRT…NVNA, LWLT…DVNA, LWQT…SLNV, SGRS…SLNV, KERQ…DLGC, KGYG…EIDE, FGNT…NVNQ, KGFT…DVNY, EGKS…EIDC, FGNT…DTAR, HDMF…LYSI, LGRT…DLRR, FGRT…GVNE, KGCS…DPSL, QGYT…CLED, IPVS…NLDV, KGRT…SALI, RKWT…RADI, YGQT…TADA, RGRT…FVLC, KGRT…STDP, SGYS…FSYL, NPFT…KIVN, KGRT…EVNA, TGRT…DLTV, NKNT…DLGL, and ALQM…TVLA. Positions 502-514 are enriched in basic and acidic residues; the sequence is YRRAEPHTPSSHD. The tract at residues 502-522 is disordered; the sequence is YRRAEPHTPSSHDAEEDEPLK. Phosphoserine is present on residues serine 1028 and serine 1075.

Protein phosphatase 6 (PP6) holoenzyme is proposed to be a heterotrimeric complex formed by the catalytic subunit, a SAPS domain-containing subunit (PP6R) and an ankyrin repeat-domain containing regulatory subunit (ARS). Interacts with PPP6R1.

In terms of biological role, putative regulatory subunit of protein phosphatase 6 (PP6) that may be involved in the recognition of phosphoprotein substrates. The sequence is that of Serine/threonine-protein phosphatase 6 regulatory ankyrin repeat subunit C (ANKRD52) from Homo sapiens (Human).